We begin with the raw amino-acid sequence, 577 residues long: Double-stranded RNA-binding protein Staufen homolog 1 (577 aa).

Ser-2 bears the N-acetylserine mark. A compositionally biased stretch (polar residues) spans 34–44 (SIPSTTSSLPS). The segment at 34-55 (SIPSTTSSLPSENAGRPIQNSA) is disordered. The region spanning 72–162 (TPTVELNALC…AAKALRILQN (91 aa)) is the DRBM 1 domain. At Arg-108 the chain carries Asymmetric dimethylarginine. Arg-115 bears the Asymmetric dimethylarginine; alternate mark. Position 115 is an omega-N-methylarginine; alternate (Arg-115). The residue at position 176 (Ser-176) is a Phosphoserine. A DRBM 2 domain is found at 184–251 (SEISQVFEIA…AIAVLEELKK (68 aa)). Ser-278 bears the Phosphoserine mark. Residues 286-354 (NPISRLAQIQ…AENMLEILGF (69 aa)) enclose the DRBM 3 domain. Positions 360-397 (QPTKPALKSEEKTPIKKPGDGRKVTFFEPGSGDENGTS) are disordered. Residues 366–384 (LKSEEKTPIKKPGDGRKVT) are compositionally biased toward basic and acidic residues. Ser-390 is modified (phosphoserine).

As to quaternary structure, binds tubulin. Binds with low affinity single-stranded RNA or DNA homopolymers. Interacts with CASC3 in an RNA-dependent manner. Identified in a mRNP complex, at least composed of DHX9, DDX3X, ELAVL1, HNRNPU, IGF2BP1, ILF3, PABPC1, PCBP2, PTBP2, STAU1, STAU2, SYNCRIP and YBX1. (Microbial infection) Interacts with HERV-K rec and gag proteins. In terms of assembly, (Microbial infection) Interacts with HIV-1 GAG polyprotein. As to quaternary structure, (Microbial infection) Interacts with influenza virus NS1 protein. (Microbial infection) Interacts with Ebola virus NP, VP30 and VP35. As to expression, widely expressed. Expressed in brain, pancreas, heart, skeletal muscles, liver, lung, kidney and placenta.

The protein localises to the cytoplasm. The protein resides in the rough endoplasmic reticulum. Its function is as follows. Binds double-stranded RNA (regardless of the sequence) and tubulin. May play a role in specific positioning of mRNAs at given sites in the cell by cross-linking cytoskeletal and RNA components, and in stimulating their translation at the site. In terms of biological role, (Microbial infection) Plays a role in virus particles production of many viruses including of HIV-1, HERV-K, ebola virus and influenza virus. Acts by interacting with various viral proteins involved in particle budding process. This chain is Double-stranded RNA-binding protein Staufen homolog 1 (STAU1), found in Homo sapiens (Human).